A 443-amino-acid polypeptide reads, in one-letter code: Ribosomal protein uS12 methylthiotransferase RimO (443 aa).

The region spanning 8–118 (PKVGFVSLGC…VVNAVHEVVP (111 aa)) is the MTTase N-terminal domain. Positions 17, 53, 82, 151, 155, and 158 each coordinate [4Fe-4S] cluster. The Radical SAM core domain maps to 137–375 (LTPRHYAYLK…MAHQQAISTA (239 aa)). The 66-residue stretch at 378–443 (QLRIGKEIEV…DEYDMWAEPI (66 aa)) folds into the TRAM domain.

This sequence belongs to the methylthiotransferase family. RimO subfamily. Requires [4Fe-4S] cluster as cofactor.

The protein localises to the cytoplasm. The enzyme catalyses L-aspartate(89)-[ribosomal protein uS12]-hydrogen + (sulfur carrier)-SH + AH2 + 2 S-adenosyl-L-methionine = 3-methylsulfanyl-L-aspartate(89)-[ribosomal protein uS12]-hydrogen + (sulfur carrier)-H + 5'-deoxyadenosine + L-methionine + A + S-adenosyl-L-homocysteine + 2 H(+). Functionally, catalyzes the methylthiolation of an aspartic acid residue of ribosomal protein uS12. The sequence is that of Ribosomal protein uS12 methylthiotransferase RimO from Pseudomonas putida (strain GB-1).